A 328-amino-acid polypeptide reads, in one-letter code: 6-phosphogluconolactonase (328 aa).

It belongs to the cycloisomerase 2 family.

It catalyses the reaction 6-phospho-D-glucono-1,5-lactone + H2O = 6-phospho-D-gluconate + H(+). The protein operates within carbohydrate degradation; pentose phosphate pathway; D-ribulose 5-phosphate from D-glucose 6-phosphate (oxidative stage): step 2/3. Functionally, catalyzes the hydrolysis of 6-phosphogluconolactone to 6-phosphogluconate. This is 6-phosphogluconolactonase from Photorhabdus laumondii subsp. laumondii (strain DSM 15139 / CIP 105565 / TT01) (Photorhabdus luminescens subsp. laumondii).